The sequence spans 323 residues: Cyclin-D5-1 (323 aa).

Disordered regions lie at residues 17 to 36 and 281 to 323; these read ESSLNEDDDETIERSDKQEP and HMTP…MRRL.

The protein belongs to the cyclin family. Cyclin D subfamily.

The polypeptide is Cyclin-D5-1 (CYCD5-1) (Arabidopsis thaliana (Mouse-ear cress)).